A 187-amino-acid polypeptide reads, in one-letter code: Orotate phosphoribosyltransferase (187 aa).

Residues arginine 98, lysine 99, lysine 102, histidine 104, and 128–136 (EDVTTTGGS) contribute to the 5-phospho-alpha-D-ribose 1-diphosphate site. Orotate is bound by residues threonine 132 and arginine 160.

It belongs to the purine/pyrimidine phosphoribosyltransferase family. PyrE subfamily. In terms of assembly, homodimer. Mg(2+) is required as a cofactor.

The catalysed reaction is orotidine 5'-phosphate + diphosphate = orotate + 5-phospho-alpha-D-ribose 1-diphosphate. The protein operates within pyrimidine metabolism; UMP biosynthesis via de novo pathway; UMP from orotate: step 1/2. In terms of biological role, catalyzes the transfer of a ribosyl phosphate group from 5-phosphoribose 1-diphosphate to orotate, leading to the formation of orotidine monophosphate (OMP). This chain is Orotate phosphoribosyltransferase, found in Rhodopseudomonas palustris (strain ATCC BAA-98 / CGA009).